Consider the following 491-residue polypeptide: Ketol-acid reductoisomerase (NADP(+)) (491 aa).

The KARI N-terminal Rossmann domain occupies 15 to 208 (AQLGKCRFMA…GGHRAGVLES (194 aa)). Residues 45–48 (CGAQ), R68, R76, S78, and 108–110 (DKQ) each bind NADP(+). H132 is an active-site residue. Residue G158 coordinates NADP(+). 2 KARI C-terminal knotted domains span residues 209-344 (SFVA…TASQ) and 345-484 (FDGK…MKDM). Mg(2+) is bound by residues D217, E221, E389, and E393. S414 is a substrate binding site.

The protein belongs to the ketol-acid reductoisomerase family. It depends on Mg(2+) as a cofactor.

The catalysed reaction is (2R)-2,3-dihydroxy-3-methylbutanoate + NADP(+) = (2S)-2-acetolactate + NADPH + H(+). It catalyses the reaction (2R,3R)-2,3-dihydroxy-3-methylpentanoate + NADP(+) = (S)-2-ethyl-2-hydroxy-3-oxobutanoate + NADPH + H(+). It functions in the pathway amino-acid biosynthesis; L-isoleucine biosynthesis; L-isoleucine from 2-oxobutanoate: step 2/4. It participates in amino-acid biosynthesis; L-valine biosynthesis; L-valine from pyruvate: step 2/4. Involved in the biosynthesis of branched-chain amino acids (BCAA). Catalyzes an alkyl-migration followed by a ketol-acid reduction of (S)-2-acetolactate (S2AL) to yield (R)-2,3-dihydroxy-isovalerate. In the isomerase reaction, S2AL is rearranged via a Mg-dependent methyl migration to produce 3-hydroxy-3-methyl-2-ketobutyrate (HMKB). In the reductase reaction, this 2-ketoacid undergoes a metal-dependent reduction by NADPH to yield (R)-2,3-dihydroxy-isovalerate. The polypeptide is Ketol-acid reductoisomerase (NADP(+)) (Enterobacter sp. (strain 638)).